We begin with the raw amino-acid sequence, 2919 residues long: Cadherin EGF LAG seven-pass G-type receptor 2 (2919 aa).

A signal peptide spans 1–31 (MRSRAASAPLPTPLLPLLLLLLLLPPSPLLG). The Extracellular segment spans residues 32–2380 (DQVGPCRSLG…GEILPLKTLT (2349 aa)). The segment at 156–194 (LRAGEGSPEESLGGRRKRNVNTAPQFQPPSYQATVPENQ) is disordered. A compositionally biased stretch (polar residues) spans 175-194 (VNTAPQFQPPSYQATVPENQ). Cadherin domains lie at 182–289 (QPPS…DPVF), 290–399 (EQQE…APQF), 400–505 (SEKR…APIF), 506–610 (VSTP…NPTF), 611–712 (TQPE…RPVF), 713–815 (QSSH…APQF), 816–921 (LRDS…PPVF), 922–1023 (EQDE…PPVL), and 1028–1146 (ILFN…SPLL). N-linked (GlcNAc...) asparagine glycosylation is found at Asn-486, Asn-557, and Asn-701. N-linked (GlcNAc...) asparagine glycosylation is found at Asn-1036, Asn-1076, Asn-1182, and Asn-1212. Residues 1228-1286 (DDNICLREPCENYMRCVSVLRFDSSAPFIASSSVLFRPIHPVGGLRCRCPPGFTGDYCE) enclose the EGF-like 1; atypical domain. One can recognise an EGF-like 2; calcium-binding domain in the interval 1288-1318 (EVDLCYSRPCGPHGRCRSREGGYTCLCLDGY). 6 disulfide bridges follow: Cys-1292-Cys-1303, Cys-1297-Cys-1312, Cys-1314-Cys-1323, Cys-1332-Cys-1343, Cys-1337-Cys-1353, and Cys-1355-Cys-1365. One can recognise an EGF-like 3; calcium-binding domain in the interval 1328 to 1366 (HSGRCTPGVCKNGGTCVNLLVGGFKCDCPSGDFEKPFCQ). In terms of domain architecture, Laminin G-like 1 spans 1367–1571 (VTTRSFPARS…IANNGTVPGC (205 aa)). 2 N-linked (GlcNAc...) asparagine glycosylation sites follow: Asn-1501 and Asn-1565. 4 disulfide bridges follow: Cys-1545–Cys-1571, Cys-1578–Cys-1589, Cys-1583–Cys-1598, and Cys-1600–Cys-1609. The region spanning 1574–1610 (KKIVCDSSICHNGGTCVNQWNAFSCECPLGFGGKSCA) is the EGF-like 4; calcium-binding domain. At Asn-1591 the chain carries (3R)-3-hydroxyasparagine. Positions 1614 to 1791 (ANPQRFLGSS…GESINVEPGC (178 aa)) constitute a Laminin G-like 2 domain. A glycan (N-linked (GlcNAc...) asparagine) is linked at Asn-1741. The region spanning 1787–1829 (VEPGCSWPDPCDSNPCPTNSYCSNDWDSYSCSCVLGYYGDNCT) is the EGF-like 5; calcium-binding domain. 13 disulfide bridges follow: Cys-1791–Cys-1802, Cys-1797–Cys-1817, Cys-1819–Cys-1828, Cys-1832–Cys-1843, Cys-1837–Cys-1855, Cys-1857–Cys-1866, Cys-1887–Cys-1899, Cys-1889–Cys-1906, Cys-1908–Cys-1921, Cys-1924–Cys-1936, Cys-1926–Cys-1943, Cys-1945–Cys-1954, and Cys-1957–Cys-1969. Asn-1827 is a glycosylation site (N-linked (GlcNAc...) asparagine). The EGF-like 6; calcium-binding domain occupies 1830 to 1867 (NVCDLNPCEHQSVCTRKPNTPHGYICECLPNYLGPYCE). Residues 1883 to 1922 (TCGPCNCDVSKGFDPDCNKTSGECHCKENHYRPPGSPTCL) enclose the EGF-like 7; calcium-binding domain. Asn-1900 is a glycosylation site (N-linked (GlcNAc...) asparagine). One can recognise a Laminin EGF-like domain in the interval 1924–1971 (CDCYPTGSLSRVCDPEDGQCPCKPGVIGRQCDRCDNPFAEVTTNGCEV). N-linked (GlcNAc...) asparagine glycosylation is found at Asn-2024, Asn-2043, and Asn-2061. Positions 2199–2369 (ETTVILPESV…AVLMDMSRRE (171 aa)) constitute a GAIN-B domain. A disordered region spans residues 2216–2241 (VRSAGPGEAQETEELARRQRRHPELS). Disulfide bonds link Cys-2319/Cys-2351 and Cys-2339/Cys-2353. Positions 2319–2369 (CVFWNHSILVSGTGGWSARGCEVVFRNESHVSCQCNHMTSFAVLMDMSRRE) are GPS. N-linked (GlcNAc...) asparagine glycans are attached at residues Asn-2323 and Asn-2345. Residues 2381 to 2401 (YVALGVTLAALMLTFLFLTLL) traverse the membrane as a helical segment. Over 2402–2413 (RALRSNQHGIRR) the chain is Cytoplasmic. The chain crosses the membrane as a helical span at residues 2414-2433 (NLTAALGLAQLVFLLGINQA). The Extracellular segment spans residues 2434–2438 (DLPFA). A helical transmembrane segment spans residues 2439-2459 (CTVIAILLHFLYLCTFSWALL). Topologically, residues 2460 to 2480 (EALHLYRALTEVRDVNASPMR) are cytoplasmic. Residues 2481 to 2501 (FYYMLGWGVPAFITGLAVGLD) traverse the membrane as a helical segment. Residues 2502–2518 (PEGYGNPDFCWLSVYDT) are Extracellular-facing. Residues 2519–2539 (LIWSFAGPVAFAVSMSVFLYI) form a helical membrane-spanning segment. Residues 2540–2563 (LSARASCAAQRQGFEKKGPVSGLR) are Cytoplasmic-facing. A helical membrane pass occupies residues 2564 to 2584 (SSFTVLLLLSATWLLALLSVN). Topologically, residues 2585–2591 (SDTLLFH) are extracellular. Residues 2592–2612 (YLFAACNCVQGPFIFLSYVVL) traverse the membrane as a helical segment. Topologically, residues 2613–2919 (SKEVRKALKF…SEFLFFNFLH (307 aa)) are cytoplasmic. The disordered stretch occupies residues 2690 to 2884 (LNPGQVPPGL…PPRPPPRQSL (195 aa)). The segment covering 2718–2730 (TDSDSDLSLEDDQ) has biased composition (acidic residues). The span at 2791-2800 (GTTTKENSGS) shows a compositional bias: polar residues. A compositionally biased stretch (basic and acidic residues) spans 2803-2815 (LEERPRENGDALT). Over residues 2857–2868 (GTGSSRGSSISE) the composition is skewed to low complexity.

It belongs to the G-protein coupled receptor 2 family. LN-TM7 subfamily. In terms of assembly, heterodimer of 2 chains generated by proteolytic processing; the large extracellular N-terminal fragment and the membrane-bound C-terminal fragment predominantly remain associated and non-covalently linked. Post-translationally, the iron and 2-oxoglutarate dependent 3-hydroxylation of aspartate and asparagine is (R) stereospecific within EGF domains. Autoproteolytically processed at the GPS region of the GAIN-B domain; this cleavage modulates receptor activity. As to expression, expressed in the CNS and in the eye.

It is found in the cell membrane. Its function is as follows. Receptor that may have an important role in cell/cell signaling during nervous system formation. The sequence is that of Cadherin EGF LAG seven-pass G-type receptor 2 from Mus musculus (Mouse).